The sequence spans 352 residues: MAIDENKQKALAAALGQIEKQFGKGSIMRLGEDRSMDVETISTGSLSLDIALGAGGLPMGRVVEIYGPESSGKTTLTLQVIASAQREGKTCAFIDAEHALDPVYARKLGVDIDNLLCSQPDTGEQALEICDALARSGAVDVIVVDSVAALTPKAEIEGEIGDSHMGLAARMMSQAMRKLAGNLKQSNTLLIFINQIRMKIGVMFGNPETTTGGNALKFYASVRLDIRRIGAVKDGDNVIGSETRVKVVKNKIAAPFKQAEFQILYGEGINFFGELVDLGVKEKLIEKAGAWYSYNGEKIGQGKANAISWLKENPAAAKEIEKKVRELLLNNEDSKPDFVVDAADAEETNPDF.

67–74 (GPESSGKT) is an ATP binding site.

Belongs to the RecA family.

The protein localises to the cytoplasm. Functionally, can catalyze the hydrolysis of ATP in the presence of single-stranded DNA, the ATP-dependent uptake of single-stranded DNA by duplex DNA, and the ATP-dependent hybridization of homologous single-stranded DNAs. It interacts with LexA causing its activation and leading to its autocatalytic cleavage. This Enterobacter sp. (strain 638) protein is Protein RecA.